We begin with the raw amino-acid sequence, 230 residues long: Orotidine 5'-phosphate decarboxylase (230 aa).

Residues Asp-11, Lys-34, 61–70, Thr-117, Arg-179, Gln-188, Gly-208, and Arg-209 contribute to the substrate site; that span reads DLKLHDIPNT. The active-site Proton donor is the Lys-63.

This sequence belongs to the OMP decarboxylase family. Type 1 subfamily. Homodimer.

The enzyme catalyses orotidine 5'-phosphate + H(+) = UMP + CO2. It participates in pyrimidine metabolism; UMP biosynthesis via de novo pathway; UMP from orotate: step 2/2. Its function is as follows. Catalyzes the decarboxylation of orotidine 5'-monophosphate (OMP) to uridine 5'-monophosphate (UMP). This Streptococcus pyogenes serotype M6 (strain ATCC BAA-946 / MGAS10394) protein is Orotidine 5'-phosphate decarboxylase.